A 206-amino-acid polypeptide reads, in one-letter code: Small ribosomal subunit protein uS4 (206 aa).

Residues 96-156 (GRLDNVVYRM…EKAKQQARIK (61 aa)) form the S4 RNA-binding domain.

Belongs to the universal ribosomal protein uS4 family. In terms of assembly, part of the 30S ribosomal subunit. Contacts protein S5. The interaction surface between S4 and S5 is involved in control of translational fidelity.

One of the primary rRNA binding proteins, it binds directly to 16S rRNA where it nucleates assembly of the body of the 30S subunit. Its function is as follows. With S5 and S12 plays an important role in translational accuracy. This is Small ribosomal subunit protein uS4 from Vibrio campbellii (strain ATCC BAA-1116).